Consider the following 71-residue polypeptide: Small ribosomal subunit protein bS21 (71 aa).

Residues 43–71 (TERKRAKASAVKRHAKKLARENARRTRLY) are disordered. Over residues 46–59 (KRAKASAVKRHAKK) the composition is skewed to basic residues. The segment covering 60–71 (LARENARRTRLY) has biased composition (basic and acidic residues).

The protein belongs to the bacterial ribosomal protein bS21 family.

This is Small ribosomal subunit protein bS21 from Pectobacterium atrosepticum (strain SCRI 1043 / ATCC BAA-672) (Erwinia carotovora subsp. atroseptica).